Consider the following 173-residue polypeptide: NADH-ubiquinone oxidoreductase chain 6 (173 aa).

A run of 6 helical transmembrane segments spans residues 1–21, 27–47, 48–68, 85–105, 106–126, and 139–159; these read MTYF…AVAS, YGVV…LSLG, VSFV…VVFV, WGVV…LIVG, GSIG…MFSV, and CGVG…FVVL.

This sequence belongs to the complex I subunit 6 family.

It localises to the mitochondrion membrane. The enzyme catalyses a ubiquinone + NADH + 5 H(+)(in) = a ubiquinol + NAD(+) + 4 H(+)(out). Its function is as follows. Core subunit of the mitochondrial membrane respiratory chain NADH dehydrogenase (Complex I) that is believed to belong to the minimal assembly required for catalysis. Complex I functions in the transfer of electrons from NADH to the respiratory chain. The immediate electron acceptor for the enzyme is believed to be ubiquinone. The polypeptide is NADH-ubiquinone oxidoreductase chain 6 (MT-ND6) (Aethia psittacula (Parakeet auklet)).